A 288-amino-acid chain; its full sequence is Putative N-terminal acetyltransferase 2 (288 aa).

The segment at 68-90 (TEEKSSQFDENKSKSNNGKKNEP) is disordered.

Heterooligomeric.

It localises to the cytoplasm. Its function is as follows. Maybe involved in N-terminal acetylation of proteins. N-acetylation plays a role in normal eukaryotic translation and processing, protect against proteolytic degradation and protein turnover. The protein is Putative N-terminal acetyltransferase 2 (NAT2) of Saccharomyces cerevisiae (strain ATCC 204508 / S288c) (Baker's yeast).